Here is a 953-residue protein sequence, read N- to C-terminus: Coatomer subunit beta (953 aa).

Thr2 carries the N-acetylthreonine modification. 6 HEAT repeats span residues 96-131 (HEMI…KEAE), 132-168 (LLEP…NFEH), 240-276 (SERA…SAPT), 277-314 (AIKA…HPAH), 316-353 (RVLQ…SRNV), and 396-433 (DMAA…RFDN). Lys494 bears the N6-acetyllysine mark.

In terms of assembly, oligomeric complex that consists of at least the alpha, beta, beta', gamma, delta, epsilon and zeta subunits. Interacts with CAPN8 and PRKCE. Interacts with SCYL1. Interacts with COPG1. Interacts with ARF1 (myristoylated); this interaction is required for binding of COPB1 to Golgi membranes. Interacts (via trunk domain) with ARF1 (via switch I region); the interaction is direct. Interacts with KCNK2 (via N-terminus); this interaction increases the channel-mediated whole cell currents and promotes plasma membrane expression of KCNK2. Interacts with STX17. Interacts with TMEM115. Interacts with TMEM41B. High expression in the lung, kidney, skeletal muscle and small intestine, and lower level of expression in heart, liver, spleen, stomach and fat.

It is found in the cytoplasm. The protein resides in the golgi apparatus membrane. The protein localises to the cytoplasmic vesicle. It localises to the COPI-coated vesicle membrane. Its subcellular location is the cell membrane. It is found in the endoplasmic reticulum-Golgi intermediate compartment. Its function is as follows. The coatomer is a cytosolic protein complex that binds to dilysine motifs and reversibly associates with Golgi non-clathrin-coated vesicles, which further mediate biosynthetic protein transport from the ER, via the Golgi up to the trans Golgi network. Coatomer complex is required for budding from Golgi membranes, and is essential for the retrograde Golgi-to-ER transport of dilysine-tagged proteins. In mammals, the coatomer can only be recruited by membranes associated to ADP-ribosylation factors (ARFs), which are small GTP-binding proteins; the complex also influences the Golgi structural integrity, as well as the processing, activity, and endocytic recycling of LDL receptors. Plays a functional role in facilitating the transport of kappa-type opioid receptor mRNAs into axons and enhances translation of these proteins. Required for limiting lipid storage in lipid droplets. Involved in lipid homeostasis by regulating the presence of perilipin family members PLIN2 and PLIN3 at the lipid droplet surface and promoting the association of adipocyte surface triglyceride lipase (PNPLA2) with the lipid droplet to mediate lipolysis. Involved in the Golgi disassembly and reassembly processes during cell cycle. Involved in autophagy by playing a role in early endosome function. Plays a role in organellar compartmentalization of secretory compartments including endoplasmic reticulum (ER)-Golgi intermediate compartment (ERGIC), Golgi, trans-Golgi network (TGN) and recycling endosomes, and in biosynthetic transport of CAV1. This is Coatomer subunit beta from Sus scrofa (Pig).